A 109-amino-acid polypeptide reads, in one-letter code: MANIKSAKKRAIQSEKRRKHNASRRSMVRTFIKKVYAAISSGDKKAAETAFAQMQPIIDRHACKGLIHKNKAARHKSNLTAQINAMSEDSLLKKRRSEGCEFKAPEKPV.

The segment at 1–26 (MANIKSAKKRAIQSEKRRKHNASRRS) is disordered.

This sequence belongs to the bacterial ribosomal protein bS20 family.

Binds directly to 16S ribosomal RNA. The chain is Small ribosomal subunit protein bS20 from Hamiltonella defensa subsp. Acyrthosiphon pisum (strain 5AT).